Consider the following 135-residue polypeptide: Glutaredoxin-C3 (135 aa).

In terms of domain architecture, Glutaredoxin spans 26-134 (VARVERLASE…PLLKEAGALW (109 aa)). Cys-46 and Cys-49 are oxidised to a cystine. The Responsive for interaction with TGA factors signature appears at 132–135 (ALWL).

The protein belongs to the glutaredoxin family. CC-type subfamily.

It is found in the cytoplasm. It localises to the nucleus. Its function is as follows. Has a glutathione-disulfide oxidoreductase activity in the presence of NADPH and glutathione reductase. Reduces low molecular weight disulfides and proteins. This chain is Glutaredoxin-C3 (GRXC3), found in Oryza sativa subsp. japonica (Rice).